The sequence spans 419 residues: UDP-N-acetylglucosamine 1-carboxyvinyltransferase (419 aa).

Residue 22 to 23 (KN) coordinates phosphoenolpyruvate. Position 93 (R93) interacts with UDP-N-acetyl-alpha-D-glucosamine. C117 functions as the Proton donor in the catalytic mechanism. Position 117 is a 2-(S-cysteinyl)pyruvic acid O-phosphothioketal (C117). Positions 307 and 329 each coordinate UDP-N-acetyl-alpha-D-glucosamine.

It belongs to the EPSP synthase family. MurA subfamily.

The protein resides in the cytoplasm. The enzyme catalyses phosphoenolpyruvate + UDP-N-acetyl-alpha-D-glucosamine = UDP-N-acetyl-3-O-(1-carboxyvinyl)-alpha-D-glucosamine + phosphate. Its pathway is cell wall biogenesis; peptidoglycan biosynthesis. In terms of biological role, cell wall formation. Adds enolpyruvyl to UDP-N-acetylglucosamine. This Shewanella baltica (strain OS195) protein is UDP-N-acetylglucosamine 1-carboxyvinyltransferase.